We begin with the raw amino-acid sequence, 507 residues long: ATP synthase subunit alpha (507 aa).

Gly171–Thr178 contributes to the ATP binding site.

It belongs to the ATPase alpha/beta chains family. In terms of assembly, F-type ATPases have 2 components, CF(1) - the catalytic core - and CF(0) - the membrane proton channel. CF(1) has five subunits: alpha(3), beta(3), gamma(1), delta(1), epsilon(1). CF(0) has three main subunits: a(1), b(2) and c(9-12). The alpha and beta chains form an alternating ring which encloses part of the gamma chain. CF(1) is attached to CF(0) by a central stalk formed by the gamma and epsilon chains, while a peripheral stalk is formed by the delta and b chains.

The protein resides in the cell inner membrane. The catalysed reaction is ATP + H2O + 4 H(+)(in) = ADP + phosphate + 5 H(+)(out). Produces ATP from ADP in the presence of a proton gradient across the membrane. The alpha chain is a regulatory subunit. This chain is ATP synthase subunit alpha, found in Bdellovibrio bacteriovorus (strain ATCC 15356 / DSM 50701 / NCIMB 9529 / HD100).